Consider the following 264-residue polypeptide: NFAT activation molecule 1 (264 aa).

A signal peptide spans 1–37; the sequence is MESWLLRRGARVRCLHPPSWLPAWCFLCLLPVPQTLQ. The Extracellular segment spans residues 38–159; it reads LTGLVSLTHT…QPPAFKVQEA (122 aa). Residues 49 to 145 form the Ig-like V-type domain; it reads LPIMVSLANT…QSDGVVILVR (97 aa). A disulfide bridge links C64 with C110. N105 and N118 each carry an N-linked (GlcNAc...) asparagine glycan. Residues 160–180 form a helical membrane-spanning segment; that stretch reads LMLGFTSLMSVLGVLGTALLL. Over 181–264 the chain is Cytoplasmic; it reads WKKKQISVLG…NEFNLVYENL (84 aa). One can recognise an ITAM domain in the interval 212-232; the sequence is ESVYTSLQRRETEVYACMKEE. Phosphotyrosine occurs at positions 215 and 226.

No direct interaction with the B-cell antigen receptor (BCR). Interacts with SYK; probably involved in BCR signaling. Interacts with ZAP70. In terms of processing, N-glycosylated. As to expression, highly expressed in the spleen, expressed by both B- and CD4+ and CD8+ T-cells, as well as non-T- and non-B-cells, including macrophages and neutrophils. Expressed at low levels, if any, in non-immune tissue.

The protein resides in the cell membrane. Its function is as follows. May function in immune system as a receptor which activates via the calcineurin/NFAT-signaling pathway the downstream cytokine gene promoters. Activates the transcription of IL-13 and TNF-alpha promoters. May be involved in the regulation of B-cell, but not T-cell, development. The sequence is that of NFAT activation molecule 1 (Nfam1) from Mus musculus (Mouse).